The sequence spans 146 residues: PTSVAVDQGSMVSNSPGEWCWPGMGYPVYPFPRCRALVKSQCAGGQVVESIQKDCCRQIAAIGDEWCICGALGSMRGSMYKELGVALADDKATVAEVFPGCRTEVMDRAVASLPAVCNQYIPNTNGTDGVCYWLSYYQPPRQMSSR.

Residues 1 to 14 (PTSVAVDQGSMVSN) form the signal peptide. An N-linked (GlcNAc...) asparagine glycan is attached at Asn-125.

It belongs to the protease inhibitor I6 (cereal trypsin/alpha-amylase inhibitor) family. As to quaternary structure, monomer. In terms of processing, five disulfide bonds, which are essential for the inhibitor activity, are probably present. Glycosylated. As to expression, endosperm.

The protein localises to the secreted. In terms of biological role, could be involved in insect defense mechanisms. Inhibits insect-type alpha-amylase. This Hordeum vulgare (Barley) protein is Alpha-amylase inhibitor BMAI-1 (IAM1).